Reading from the N-terminus, the 128-residue chain is CD59 glycoprotein (128 aa).

The first 25 residues, 1-25 (MGIQGGSVLFGLLLVLAVFCHSGNS), serve as a signal peptide directing secretion. The UPAR/Ly6 domain occupies 26–108 (LQCYSCPYPT…ALKNGGTTLS (83 aa)). Intrachain disulfides connect Cys-28-Cys-51, Cys-31-Cys-38, Cys-44-Cys-64, Cys-70-Cys-88, and Cys-89-Cys-94. An N-linked (GlcNAc...) asparagine glycan is attached at Asn-43. The GPI-anchor amidated asparagine moiety is linked to residue Asn-102. A propeptide spans 103–128 (GGTTLSKKTVLLLVIPFLVAAWSLHP) (removed in mature form).

Interacts with T-cell surface antigen CD2. In terms of processing, N- and O-glycosylated.

The protein resides in the cell membrane. Its subcellular location is the secreted. Functionally, potent inhibitor of the complement membrane attack complex (MAC) action, which protects self-cells from damage during complement activation. Acts by binding to the beta-haipins of C8 (C8A and C8B) components of the assembling MAC, forming an intermolecular beta-sheet that prevents incorporation of the multiple copies of C9 required for complete formation of the osmolytic pore. This Aotus trivirgatus (Three-striped night monkey) protein is CD59 glycoprotein.